The chain runs to 76 residues: Serine proteinase inhibitor IA-1 (76 aa).

An N-acetylserine modification is found at Ser-1.

It belongs to the protease inhibitor I9 family.

Functionally, specifically inhibits an endogenous intracellular serine proteinase (proteinase A). This is Serine proteinase inhibitor IA-1 from Pleurotus ostreatus (Oyster mushroom).